The primary structure comprises 702 residues: Elongation factor G (702 aa).

In terms of domain architecture, tr-type G spans Glu8 to Val290. GTP is bound by residues Ala17–Thr24, Asp88–His92, and Asn142–Asp145.

It belongs to the TRAFAC class translation factor GTPase superfamily. Classic translation factor GTPase family. EF-G/EF-2 subfamily.

Its subcellular location is the cytoplasm. Its function is as follows. Catalyzes the GTP-dependent ribosomal translocation step during translation elongation. During this step, the ribosome changes from the pre-translocational (PRE) to the post-translocational (POST) state as the newly formed A-site-bound peptidyl-tRNA and P-site-bound deacylated tRNA move to the P and E sites, respectively. Catalyzes the coordinated movement of the two tRNA molecules, the mRNA and conformational changes in the ribosome. In Janthinobacterium sp. (strain Marseille) (Minibacterium massiliensis), this protein is Elongation factor G.